The sequence spans 346 residues: Fusaric acid resistance protein FusC (346 aa).

The next 4 membrane-spanning stretches (helical) occupy residues 10 to 30, 248 to 268, 291 to 311, and 315 to 335; these read VIIGIVSAGVVSALVFPRYTG, VILALGWFWIETAWPSGVMLV, MGMGTALAVCTGFLLTFGIYP, and GFVLLCAALAPLLAIGIYMSL.

This sequence belongs to the aromatic acid exporter ArAE (TC 2.A.85) family.

The protein localises to the cell membrane. Involved in the resistance (detoxification) of the fungal toxin fusaric acid. This is Fusaric acid resistance protein FusC (fusC) from Burkholderia cepacia (Pseudomonas cepacia).